A 119-amino-acid chain; its full sequence is UPF0102 protein SGR_1878 (119 aa).

This sequence belongs to the UPF0102 family.

The polypeptide is UPF0102 protein SGR_1878 (Streptomyces griseus subsp. griseus (strain JCM 4626 / CBS 651.72 / NBRC 13350 / KCC S-0626 / ISP 5235)).